The following is a 323-amino-acid chain: Tetraacyldisaccharide 4'-kinase (323 aa).

Position 56–63 (Thr-56–Thr-63) interacts with ATP.

Belongs to the LpxK family.

The catalysed reaction is a lipid A disaccharide + ATP = a lipid IVA + ADP + H(+). It participates in glycolipid biosynthesis; lipid IV(A) biosynthesis; lipid IV(A) from (3R)-3-hydroxytetradecanoyl-[acyl-carrier-protein] and UDP-N-acetyl-alpha-D-glucosamine: step 6/6. Functionally, transfers the gamma-phosphate of ATP to the 4'-position of a tetraacyldisaccharide 1-phosphate intermediate (termed DS-1-P) to form tetraacyldisaccharide 1,4'-bis-phosphate (lipid IVA). This Legionella pneumophila (strain Lens) protein is Tetraacyldisaccharide 4'-kinase.